The following is a 195-amino-acid chain: A-type ATP synthase subunit E (195 aa).

This sequence belongs to the V-ATPase E subunit family. Has multiple subunits with at least A(3), B(3), C, D, E, F, H, I and proteolipid K(x).

It localises to the cell membrane. Component of the A-type ATP synthase that produces ATP from ADP in the presence of a proton gradient across the membrane. This is A-type ATP synthase subunit E from Halobacterium salinarum (strain ATCC 29341 / DSM 671 / R1).